A 239-amino-acid polypeptide reads, in one-letter code: Ribonuclease PH (239 aa).

Phosphate is bound by residues Arg-87 and 125–127; that span reads GTR.

The protein belongs to the RNase PH family. As to quaternary structure, homohexameric ring arranged as a trimer of dimers.

The catalysed reaction is tRNA(n+1) + phosphate = tRNA(n) + a ribonucleoside 5'-diphosphate. Functionally, phosphorolytic 3'-5' exoribonuclease that plays an important role in tRNA 3'-end maturation. Removes nucleotide residues following the 3'-CCA terminus of tRNAs; can also add nucleotides to the ends of RNA molecules by using nucleoside diphosphates as substrates, but this may not be physiologically important. Probably plays a role in initiation of 16S rRNA degradation (leading to ribosome degradation) during starvation. The polypeptide is Ribonuclease PH (Pseudomonas paraeruginosa (strain DSM 24068 / PA7) (Pseudomonas aeruginosa (strain PA7))).